A 396-amino-acid polypeptide reads, in one-letter code: L-lactate dehydrogenase (396 aa).

Positions 1-380 constitute an FMN hydroxy acid dehydrogenase domain; that stretch reads MIISAASDYR…TQDSLVQGLG (380 aa). Tyrosine 24 lines the substrate pocket. The FMN site is built by serine 106 and glutamine 127. Residue tyrosine 129 participates in substrate binding. Position 155 (threonine 155) interacts with FMN. Arginine 164 serves as a coordination point for substrate. FMN is bound at residue lysine 251. The Proton acceptor role is filled by histidine 275. A substrate-binding site is contributed by arginine 278. 306–330 contacts FMN; it reads DSGIRNGLDVVRMIALGADTVLLGR.

The protein belongs to the FMN-dependent alpha-hydroxy acid dehydrogenase family. FMN is required as a cofactor.

It is found in the cell inner membrane. It carries out the reaction (S)-lactate + A = pyruvate + AH2. Its function is as follows. Catalyzes the conversion of L-lactate to pyruvate. Is coupled to the respiratory chain. In Escherichia coli O7:K1 (strain IAI39 / ExPEC), this protein is L-lactate dehydrogenase.